Here is a 147-residue protein sequence, read N- to C-terminus: Large ribosomal subunit protein uL15 (147 aa).

The segment at 1–58 (MKLFELKPAPGAKKRPKRVGRGESSGHGKTSTRGHKGQWARSGGGVRPGFEGGQMPLT) is disordered. Positions 42–52 (SGGGVRPGFEG) are enriched in gly residues.

Belongs to the universal ribosomal protein uL15 family. As to quaternary structure, part of the 50S ribosomal subunit.

Its function is as follows. Binds to the 23S rRNA. The sequence is that of Large ribosomal subunit protein uL15 from Caldicellulosiruptor saccharolyticus (strain ATCC 43494 / DSM 8903 / Tp8T 6331).